The primary structure comprises 441 residues: Matrix extracellular phosphoglycoprotein (441 aa).

An N-terminal signal peptide occupies residues 1 to 24 (MTPEGLMKMQAVSVGLLLFSMTWA). A glycan (N-linked (GlcNAc...) asparagine) is linked at asparagine 82. Residues 137 to 441 (QSSPVKSKHT…SGSSSESHGD (305 aa)) are disordered. Over residues 142–156 (KSKHTKHTRQTRRST) the composition is skewed to basic residues. Residues 178–200 (PDLLVRGDNDVPPFSGDGQHFMH) are dentonin. The Cell attachment site motif lies at 183-185 (RGD). O-linked (Xyl...) (chondroitin sulfate) serine glycosylation is present at serine 192. Positions 211 to 223 (PESSTSRPLSGSS) are enriched in polar residues. Basic and acidic residues predominate over residues 313 to 325 (SREKVKGGVEHAG). Polar residues-rich tracts occupy residues 349 to 358 (GNQLTLTASQ) and 391 to 405 (GQNN…SQRR). The tract at residues 424-441 (RDSSESSSSGSSSESHGD) is ASARM motif; interaction with PHEX. A compositionally biased stretch (low complexity) spans 428–441 (ESSSSGSSSESHGD).

Belongs to the PF07175/osteoregulin family. In terms of assembly, interacts (via ASARM motif) with PHEX; the interaction is zinc-dependent. In terms of processing, phosphorylated on serine residues in the ASARM motif; the phosphorylation is important for the inhibition of bone mineralization. Cleaved by CTSB/cathepsin B; the cleavage is blocked by metalloprotease PHEX. As to expression, expressed in osteocytes (at protein level). Expressed by chondrocytes, specifically in the hypertrophic zone of the bone growth plate (at protein level). Expressed in osteoblasts in bone (at protein level). Expressed by osteoblasts within the metaphysis (at protein level). Expressed at low levels in white fat, brown fat, testes, brain and aorta. Expressed in the craniofacial complex (at protein level). Expressed in odontoblasts, ameloblasts and in predentin during tooth development (at protein level). Expressed in the kidney (at protein level). Expressed in osteocytes in mandibular condylar cartilage and tibial cartilage (at protein level). Expressed in salivary glands.

The protein localises to the secreted. Its subcellular location is the extracellular space. The protein resides in the extracellular matrix. Regulates renal phosphate and uric acid excretion. Regulates bone mineralization by osteoblasts and cartilage mineralization by chondrocytes. Regulates the mineralization of the extracellular matrix of the craniofacial complex, such as teeth, bone and cartilage. Increases dental pulp stem cell proliferation. This chain is Matrix extracellular phosphoglycoprotein, found in Mus musculus (Mouse).